Here is a 366-residue protein sequence, read N- to C-terminus: MWPLSHRHLCLAFLLVCVLSAISFFLHVHQDSFRHGLGLSLLCPDRRLVTHPVAIFCLPGTPMSPNTSSPCPQHPASLSGTWTIYPDGRFGNQMGQYATLLALAQLNARQAFILPAMHAALAPVFRITLPVLAPEVDSHTPWRELRLHDWMSEEYADLEDPFLKLSGFPCSWTFFHHLREQIRSEFTLHDHLREEAQSVLRRLRLGRPWDRPRTFVGVHVRRGDYLQVMPQRWKGVVGNSAYLREAMDWFRARHEAPVFVVTSNGMEWCRENIDTSKGDVMFAGDGQEASPWKDFALLTQCNHTIMTIGTFGFWAAYLAGGDTVYLANFTLPDSEFLKIFKPEAAFLPEWVGINADLSPLWTLAEP.

Residues 1 to 8 (MWPLSHRH) lie on the Cytoplasmic side of the membrane. The helical; Signal-anchor for type II membrane protein transmembrane segment at 9–25 (LCLAFLLVCVLSAISFF) threads the bilayer. Residues 26–366 (LHVHQDSFRH…LSPLWTLAEP (341 aa)) are Lumenal-facing. 3 N-linked (GlcNAc...) asparagine glycosylation sites follow: Asn66, Asn302, and Asn328.

Belongs to the glycosyltransferase 11 family.

It is found in the golgi apparatus. The protein localises to the golgi stack membrane. The catalysed reaction is a beta-D-galactosyl-(1-&gt;4)-N-acetyl-beta-D-glucosaminyl derivative + GDP-beta-L-fucose = an alpha-L-Fuc-(1-&gt;2)-beta-D-Gal-(1-&gt;4)-beta-D-GlcNAc derivative + GDP + H(+). It carries out the reaction a ganglioside GA1 + GDP-beta-L-fucose = a ganglioside Fuc-GA1 + GDP + H(+). It catalyses the reaction a beta-D-Gal-(1-&gt;3)-beta-D-GlcNAc-(1-&gt;3)-beta-D-Gal-(1-&gt;4)-beta-D-Glc-(1&lt;-&gt;1')-Cer(d18:1(4E)) + GDP-beta-L-fucose = alpha-L-fucosyl-(1-&gt;2)- beta-D-galactosyl-(1-&gt;3)-N-acetyl-beta-D-glucosaminyl-(1-&gt;3)-beta-D-galactosyl-(1-&gt;4)-beta-D-glucosyl-(1&lt;-&gt;1')-N-acylsphing-4-enine + GDP + H(+). The enzyme catalyses a neolactoside nLc4Cer(d18:1(4E)) + GDP-beta-L-fucose = a neolactoside IV(2)-alpha-Fuc-nLc4Cer(d18:1(4E)) + GDP + H(+). The catalysed reaction is a ganglioside GM1 + GDP-beta-L-fucose = a ganglioside Fuc-GM1 + GDP + H(+). It carries out the reaction beta-D-galactosyl-(1-&gt;3)-N-acetyl-D-galactosamine + GDP-beta-L-fucose = alpha-L-fucosyl-(1-&gt;2)-beta-D-galactosyl-(1-&gt;3)-N-acetyl-D-galactosamine + GDP + H(+). Its pathway is protein modification; protein glycosylation. Functionally, catalyzes the transfer of L-fucose, from a guanosine diphosphate-beta-L-fucose, to the terminal galactose residue of glycoconjugates through an alpha(1,2) linkage leading to H antigen synthesis that is an intermediate substrate in the synthesis of ABO blood group antigens. H antigen is essential for maturation of the glomerular layer of the main olfactory bulb, in cell migration and early cell-cell contacts during tumor associated angiogenesis. Preferentially fucosylates soluble lactose and to a lesser extent fucosylates glycolipids gangliosides GA1 and GM1a. The polypeptide is Galactoside alpha-(1,2)-fucosyltransferase 1 (Alouatta belzebul (Red-handed howler monkey)).